Here is a 125-residue protein sequence, read N- to C-terminus: Small ribosomal subunit protein uS12 (125 aa).

Aspartate 89 carries the post-translational modification 3-methylthioaspartic acid.

Belongs to the universal ribosomal protein uS12 family. In terms of assembly, part of the 30S ribosomal subunit. Contacts proteins S8 and S17. May interact with IF1 in the 30S initiation complex.

Its function is as follows. With S4 and S5 plays an important role in translational accuracy. Functionally, interacts with and stabilizes bases of the 16S rRNA that are involved in tRNA selection in the A site and with the mRNA backbone. Located at the interface of the 30S and 50S subunits, it traverses the body of the 30S subunit contacting proteins on the other side and probably holding the rRNA structure together. The combined cluster of proteins S8, S12 and S17 appears to hold together the shoulder and platform of the 30S subunit. This Clostridium botulinum (strain Alaska E43 / Type E3) protein is Small ribosomal subunit protein uS12.